Consider the following 145-residue polypeptide: Putative pre-16S rRNA nuclease (145 aa).

The protein belongs to the YqgF nuclease family.

It is found in the cytoplasm. In terms of biological role, could be a nuclease involved in processing of the 5'-end of pre-16S rRNA. The chain is Putative pre-16S rRNA nuclease from Microcystis aeruginosa (strain NIES-843 / IAM M-2473).